The primary structure comprises 197 residues: dTTP/UTP pyrophosphatase (197 aa).

Asp-70 acts as the Proton acceptor in catalysis.

Belongs to the Maf family. YhdE subfamily. The cofactor is a divalent metal cation.

It is found in the cytoplasm. The enzyme catalyses dTTP + H2O = dTMP + diphosphate + H(+). It catalyses the reaction UTP + H2O = UMP + diphosphate + H(+). Nucleoside triphosphate pyrophosphatase that hydrolyzes dTTP and UTP. May have a dual role in cell division arrest and in preventing the incorporation of modified nucleotides into cellular nucleic acids. In Salmonella choleraesuis (strain SC-B67), this protein is dTTP/UTP pyrophosphatase (yceF2).